The following is a 598-amino-acid chain: Elongation factor 4 (598 aa).

In terms of domain architecture, tr-type G spans 2–183; it reads KHIRNFCIIA…AIIEKIPHPK (182 aa). GTP contacts are provided by residues 14–19 and 130–133; these read DHGKST and NKVD.

The protein belongs to the TRAFAC class translation factor GTPase superfamily. Classic translation factor GTPase family. LepA subfamily.

It is found in the cell inner membrane. The catalysed reaction is GTP + H2O = GDP + phosphate + H(+). Functionally, required for accurate and efficient protein synthesis under certain stress conditions. May act as a fidelity factor of the translation reaction, by catalyzing a one-codon backward translocation of tRNAs on improperly translocated ribosomes. Back-translocation proceeds from a post-translocation (POST) complex to a pre-translocation (PRE) complex, thus giving elongation factor G a second chance to translocate the tRNAs correctly. Binds to ribosomes in a GTP-dependent manner. The sequence is that of Elongation factor 4 from Flavobacterium psychrophilum (strain ATCC 49511 / DSM 21280 / CIP 103535 / JIP02/86).